A 196-amino-acid polypeptide reads, in one-letter code: uncharacterized protein (196 aa).

The protein belongs to the flavoredoxin family. It depends on FMN as a cofactor.

This is an uncharacterized protein from Aquifex aeolicus (strain VF5).